A 196-amino-acid polypeptide reads, in one-letter code: Cilia- and flagella-associated protein 107 (196 aa).

2 mn regions span residues 46–61 (TPQTIYRKEYVPFPGH) and 96–108 (ISTYDDHYNRHNY). A disordered region spans residues 168–196 (YPRPPAGAMSRREHAIPVPPPRLQPVPHF). Positions 184-196 (PVPPPRLQPVPHF) are enriched in pro residues.

In terms of assembly, microtubule inner protein component of sperm flagellar doublet microtubules. In terms of tissue distribution, expressed in trachea multiciliated cells.

Its subcellular location is the cytoplasm. It localises to the cytoskeleton. It is found in the cilium axoneme. The protein localises to the flagellum axoneme. Microtubule inner protein (MIP) part of the dynein-decorated doublet microtubules (DMTs) in cilia axoneme, which is required for motile cilia beating. This chain is Cilia- and flagella-associated protein 107, found in Bos taurus (Bovine).